A 314-amino-acid chain; its full sequence is ATP synthase gamma chain (314 aa).

Belongs to the ATPase gamma chain family. In terms of assembly, F-type ATPases have 2 components, CF(1) - the catalytic core - and CF(0) - the membrane proton channel. CF(1) has five subunits: alpha(3), beta(3), gamma(1), delta(1), epsilon(1). CF(0) has three main subunits: a, b and c.

Its subcellular location is the cellular thylakoid membrane. Produces ATP from ADP in the presence of a proton gradient across the membrane. The gamma chain is believed to be important in regulating ATPase activity and the flow of protons through the CF(0) complex. This chain is ATP synthase gamma chain, found in Synechocystis sp. (strain ATCC 27184 / PCC 6803 / Kazusa).